A 485-amino-acid chain; its full sequence is Apolipoprotein N-acyltransferase (485 aa).

6 helical membrane passes run 8-28, 49-69, 76-96, 121-141, 157-177, and 186-206; these read IAGA…IAFV, GWLF…VSIH, VPLA…FIAF, WWVV…WLFL, FGIY…YLLV, and IMCL…TFIP. In terms of domain architecture, CN hydrolase spans 220 to 457; the sequence is VQGNIGQRLK…RLLLTGQIKP (238 aa). Glutamate 259 serves as the catalytic Proton acceptor. Lysine 317 is a catalytic residue. The Nucleophile role is filled by cysteine 369. A helical membrane pass occupies residues 464 to 484; sequence LMRWNYYPVVGIIIIFLLLTF.

Belongs to the CN hydrolase family. Apolipoprotein N-acyltransferase subfamily.

It is found in the cell inner membrane. The catalysed reaction is N-terminal S-1,2-diacyl-sn-glyceryl-L-cysteinyl-[lipoprotein] + a glycerophospholipid = N-acyl-S-1,2-diacyl-sn-glyceryl-L-cysteinyl-[lipoprotein] + a 2-acyl-sn-glycero-3-phospholipid + H(+). Its pathway is protein modification; lipoprotein biosynthesis (N-acyl transfer). Functionally, catalyzes the phospholipid dependent N-acylation of the N-terminal cysteine of apolipoprotein, the last step in lipoprotein maturation. The polypeptide is Apolipoprotein N-acyltransferase (Coxiella burnetii (strain RSA 493 / Nine Mile phase I)).